The chain runs to 423 residues: Large ribosomal subunit protein mL37 (423 aa).

The transit peptide at 1 to 29 (MALASGPAMRALAGSARLGLGGYGAPKRG) directs the protein to the mitochondrion.

Belongs to the mitochondrion-specific ribosomal protein mL37 family. Component of the mitochondrial ribosome large subunit (39S) which comprises a 16S rRNA and about 50 distinct proteins.

The protein localises to the mitochondrion. In Rattus norvegicus (Rat), this protein is Large ribosomal subunit protein mL37 (Mrpl37).